Here is a 202-residue protein sequence, read N- to C-terminus: Holliday junction branch migration complex subunit RuvA (202 aa).

Residues M1 to S62 are domain I. A domain II region spans residues D63 to T141. A flexible linker region spans residues L142 to T151. Residues T152–K202 are domain III.

Belongs to the RuvA family. Homotetramer. Forms an RuvA(8)-RuvB(12)-Holliday junction (HJ) complex. HJ DNA is sandwiched between 2 RuvA tetramers; dsDNA enters through RuvA and exits via RuvB. An RuvB hexamer assembles on each DNA strand where it exits the tetramer. Each RuvB hexamer is contacted by two RuvA subunits (via domain III) on 2 adjacent RuvB subunits; this complex drives branch migration. In the full resolvosome a probable DNA-RuvA(4)-RuvB(12)-RuvC(2) complex forms which resolves the HJ.

It is found in the cytoplasm. Its function is as follows. The RuvA-RuvB-RuvC complex processes Holliday junction (HJ) DNA during genetic recombination and DNA repair, while the RuvA-RuvB complex plays an important role in the rescue of blocked DNA replication forks via replication fork reversal (RFR). RuvA specifically binds to HJ cruciform DNA, conferring on it an open structure. The RuvB hexamer acts as an ATP-dependent pump, pulling dsDNA into and through the RuvAB complex. HJ branch migration allows RuvC to scan DNA until it finds its consensus sequence, where it cleaves and resolves the cruciform DNA. This is Holliday junction branch migration complex subunit RuvA from Levilactobacillus brevis (strain ATCC 367 / BCRC 12310 / CIP 105137 / JCM 1170 / LMG 11437 / NCIMB 947 / NCTC 947) (Lactobacillus brevis).